A 496-amino-acid chain; its full sequence is Glycine receptor subunit beta (496 aa).

Positions 1–22 are cleaved as a signal peptide; it reads MKFSLAISFFILMSLLFEDACA. Over 23–268 the chain is Extracellular; the sequence is KEKSSKKGKG…IFTLRRQVGF (246 aa). A disordered region spans residues 32–53; sequence GKKKQYLCPSQQSPEDLARVPP. A glycan (N-linked (GlcNAc...) asparagine) is linked at Asn54. 2 residues coordinate glycine: Arg108 and Ser174. Residues Cys183 and Cys197 are joined by a disulfide bond. Residue Asn242 is glycosylated (N-linked (GlcNAc...) asparagine). A disulfide bond links Cys243 and Cys255. Thr250 is a binding site for glycine. A helical transmembrane segment spans residues 269–289; it reads YMMGVYAPTLLIVVLSWLSFW. Residues 290-294 are Cytoplasmic-facing; that stretch reads INPDA. A helical transmembrane segment spans residues 295-315; that stretch reads SAARVPLGIFSVLSLASECTT. The Extracellular portion of the chain corresponds to 316–327; that stretch reads LAAELPKVSYVK. The chain crosses the membrane as a helical span at residues 328 to 349; the sequence is ALDVWLIACLLFGFASLVEYAV. At 350–471 the chain is on the cytoplasmic side; sequence VQVMLNNPKR…KPVIPTAAKR (122 aa). A Phosphothreonine modification is found at Thr391. A helical transmembrane segment spans residues 472–495; the sequence is IDLYARALFPFCFLFFNVIYWSIY. Residue Leu496 is a topological domain, extracellular.

This sequence belongs to the ligand-gated ion channel (TC 1.A.9) family. Glycine receptor (TC 1.A.9.3) subfamily. GLRB sub-subfamily. Forms heteropentamers with glycin receptor alpha subunits. Heteropentamers with GLRA1 can be composed of two GLRA1 and three GLRB subunits, or three GLRA1 and two GLRB subunits, or four GLRA1 subunits and one GLRB subunit. Forms heteropentamers with GLRA2. Functional GLRB-GLRA2 heteropentamers contain four GLRA2 subunits and one GLRB subunit, although alternative subunit composition cannot be excluded. Forms a heteropentamer with GLRA3. Interacts with GPHN. Detected in spinal cord, brain and brain stem, especially in the periolivary region, spinal nuclei, trigeminal nucleus, medulla oblongata, pons and midbrain. Detected in the inner plexiform layer of the retina (at protein level). High levels of expression in cortex, hippocampus, thalamus and cerebellum. Detected in spinal cord.

Its subcellular location is the postsynaptic cell membrane. It is found in the synapse. The protein localises to the cell projection. It localises to the dendrite. The protein resides in the cell membrane. Its subcellular location is the cytoplasm. It carries out the reaction chloride(in) = chloride(out). Channel opening is triggered by extracellular glycine. Heteropentameric channels composed of GLRB and GLRA1 are activated by lower glycine levels than homopentameric GLRA1. Its function is as follows. Subunit of heteromeric glycine-gated chloride channels. Plays an important role in the down-regulation of neuronal excitability. Contributes to the generation of inhibitory postsynaptic currents. This is Glycine receptor subunit beta (Glrb) from Mus musculus (Mouse).